The following is a 739-amino-acid chain: Eukaryotic translation initiation factor 3 subunit B (739 aa).

The RRM domain occupies 39 to 125 (AFVVIDGLPV…HTLAVNKLTD (87 aa)). WD repeat units follow at residues 191–229 (RDHW…KQKQ), 231–288 (PHPF…RSFV), 457–498 (SLKD…SFFA), 516–559 (IEKK…EKPE), and 574–612 (NEHF…HTFS).

The protein belongs to the eIF-3 subunit B family. As to quaternary structure, component of the eukaryotic translation initiation factor 3 (eIF-3) complex.

It is found in the cytoplasm. Functionally, RNA-binding component of the eukaryotic translation initiation factor 3 (eIF-3) complex, which is involved in protein synthesis of a specialized repertoire of mRNAs and, together with other initiation factors, stimulates binding of mRNA and methionyl-tRNAi to the 40S ribosome. The eIF-3 complex specifically targets and initiates translation of a subset of mRNAs involved in cell proliferation. The chain is Eukaryotic translation initiation factor 3 subunit B from Coccidioides immitis (strain RS) (Valley fever fungus).